A 373-amino-acid chain; its full sequence is Chaperone protein DnaJ (373 aa).

A J domain is found at 4–68; sequence NYYQILGVSK…QTRAAYDRLG (65 aa). The CR-type zinc-finger motif lies at 136–214; that stretch reads GIEKNISFSS…CHGMGRYHKQ (79 aa). Cysteine 149, cysteine 152, cysteine 166, cysteine 169, cysteine 188, cysteine 191, cysteine 202, and cysteine 205 together coordinate Zn(2+). CXXCXGXG motif repeat units follow at residues 149-156, 166-173, 188-195, and 202-209; these read CDTCHGSG, CDACSGVG, CHKCQGNG, and CKKCHGMG.

Belongs to the DnaJ family. Homodimer. The cofactor is Zn(2+).

It is found in the cytoplasm. Its function is as follows. Participates actively in the response to hyperosmotic and heat shock by preventing the aggregation of stress-denatured proteins and by disaggregating proteins, also in an autonomous, DnaK-independent fashion. Unfolded proteins bind initially to DnaJ; upon interaction with the DnaJ-bound protein, DnaK hydrolyzes its bound ATP, resulting in the formation of a stable complex. GrpE releases ADP from DnaK; ATP binding to DnaK triggers the release of the substrate protein, thus completing the reaction cycle. Several rounds of ATP-dependent interactions between DnaJ, DnaK and GrpE are required for fully efficient folding. Also involved, together with DnaK and GrpE, in the DNA replication of plasmids through activation of initiation proteins. This Rickettsia peacockii (strain Rustic) protein is Chaperone protein DnaJ.